A 131-amino-acid chain; its full sequence is Glycine cleavage system H protein (131 aa).

The Lipoyl-binding domain occupies 24–106 (VYCVGITEHA…YTDGWLFKIK (83 aa)). K65 bears the N6-lipoyllysine mark.

Belongs to the GcvH family. In terms of assembly, the glycine cleavage system is composed of four proteins: P, T, L and H. The cofactor is (R)-lipoate.

Functionally, the glycine cleavage system catalyzes the degradation of glycine. The H protein shuttles the methylamine group of glycine from the P protein to the T protein. This is Glycine cleavage system H protein from Sodalis glossinidius (strain morsitans).